Consider the following 141-residue polypeptide: Early nodulin-like protein 19 (141 aa).

Residues M1 to A26 form the signal peptide. One can recognise a Phytocyanin domain in the interval K27–T127. N42 and N88 each carry an N-linked (GlcNAc...) asparagine glycan. C80 and C115 are oxidised to a cystine.

The protein belongs to the early nodulin-like (ENODL) family.

Functionally, may act as a carbohydrate transporter. This is Early nodulin-like protein 19 from Arabidopsis thaliana (Mouse-ear cress).